A 261-amino-acid chain; its full sequence is MSGLAFKVVIPARYASTRLPAKPLLDLGGKPMVVRVAERARLSGADEIWVATDHLEVRAAAEAHEVAALMTRSDHATGTDRLAEVVEQRGWAGDTIIVNVQGDEPLIEPEVIIQTARQLAASGADIATVAHPITDAADFFNPNVVKVVCRADGDAAYFSRAPIPYARDHFAKEDGGETLPANFPAYRHVGLYAYRASFLKAYAGLMPAPTEHFESLEQLRALWHGYRISVTLIDAAPAPGVDTPEDAERMRKLFDRANNCE.

This sequence belongs to the KdsB family.

Its subcellular location is the cytoplasm. The enzyme catalyses 3-deoxy-alpha-D-manno-oct-2-ulosonate + CTP = CMP-3-deoxy-beta-D-manno-octulosonate + diphosphate. It participates in nucleotide-sugar biosynthesis; CMP-3-deoxy-D-manno-octulosonate biosynthesis; CMP-3-deoxy-D-manno-octulosonate from 3-deoxy-D-manno-octulosonate and CTP: step 1/1. The protein operates within bacterial outer membrane biogenesis; lipopolysaccharide biosynthesis. Activates KDO (a required 8-carbon sugar) for incorporation into bacterial lipopolysaccharide in Gram-negative bacteria. This Dechloromonas aromatica (strain RCB) protein is 3-deoxy-manno-octulosonate cytidylyltransferase.